Reading from the N-terminus, the 354-residue chain is Lysophosphatidic acid receptor 3 (354 aa).

The Extracellular portion of the chain corresponds to 1 to 31 (MNECHYDKRMDFFYNRSNTDTADEWTGTKLV). N15 carries N-linked (GlcNAc...) asparagine glycosylation. A helical membrane pass occupies residues 32-52 (IVLCVGTFFCLFIFFSNSLVI). Residues 53–67 (AAVITNRKFHFPFYY) are Cytoplasmic-facing. A helical membrane pass occupies residues 68-88 (LLANLAAADFFAGIAYVFLMF). The Extracellular segment spans residues 89-101 (NTGPVSKTLTVNR). A helical transmembrane segment spans residues 102–124 (WLLRQGLLDTSLTASLANLLVIA). Residues 125 to 146 (VERHMSIMRMRIHSNLTKKRVT) lie on the Cytoplasmic side of the membrane. Residues 147–167 (LLILLVWAIAIFMGAVPTLGW) traverse the membrane as a helical segment. Topologically, residues 168 to 186 (NCLCNISACSSLAPIYSRS) are extracellular. N172 is a glycosylation site (N-linked (GlcNAc...) asparagine). The helical transmembrane segment at 187–207 (YLIFWTVSNLLAFFIMVVVYV) threads the bilayer. At 208–240 (RIYMYVKRKTNVLSPHTSGSISRRRAPMKLMKT) the chain is on the cytoplasmic side. A helical transmembrane segment spans residues 241-261 (VMTVLGAFVVCWTPGLVVLLL). The Extracellular segment spans residues 262–276 (DGLNCKQCNVQHVKR). The helical transmembrane segment at 277–295 (WFLLLALLNSVMNPIIYSY) threads the bilayer. At 296-354 (KDEDMYNTMRKMICCAPHDSNAERHPSRIPSTIHSRSDTGSQYLEDSISQGQVCNKSSS) the chain is on the cytoplasmic side. C309 carries the S-palmitoyl cysteine lipid modification.

Belongs to the G-protein coupled receptor 1 family.

The protein resides in the cell membrane. Its function is as follows. Receptor for lysophosphatidic acid (LPA), a mediator of diverse cellular activities. Seems to be coupled to the G(i)/G(o) and G(q) families of heteromeric G proteins. This chain is Lysophosphatidic acid receptor 3 (Lpar3), found in Rattus norvegicus (Rat).